The following is a 43-amino-acid chain: Snake venom metalloproteinase crotalin (43 aa).

Residues L1–P43 form the Peptidase M12B domain. Residue H13 participates in Zn(2+) binding.

It belongs to the venom metalloproteinase (M12B) family. P-I subfamily. Monomer. The cofactor is Zn(2+). This protein autoproteolytically degrades to 10 kDa and 14 kDa fragments in the presence of SDS. Interestingly, the two fragments, as well as reduced crotalin are able to bind vWF, indicating that the binding activity does not require a specific protein conformation. In terms of tissue distribution, expressed by the venom gland.

It is found in the secreted. In terms of biological role, snake venom zinc metalloproteinase that inhibits ristocin-induced platelet aggregation by abolishing the binding of von Willebrand factor (vWF) to platelet glycoprotein Ib alpha (GPIBA) through the cleavage of both GP1BA and vWF. Also has fibrinogenolytic activities by degrading the alpha- (FGA) and beta-chain (FGB) of fibrinogen. In vivo, induces a slight hemorrhage when applied to chick chorioallantoic membrane and has potent antithrombic effect. This Crotalus atrox (Western diamondback rattlesnake) protein is Snake venom metalloproteinase crotalin.